We begin with the raw amino-acid sequence, 190 residues long: Elongation factor P (190 aa).

The protein belongs to the elongation factor P family.

It localises to the cytoplasm. It participates in protein biosynthesis; polypeptide chain elongation. In terms of biological role, involved in peptide bond synthesis. Stimulates efficient translation and peptide-bond synthesis on native or reconstituted 70S ribosomes in vitro. Probably functions indirectly by altering the affinity of the ribosome for aminoacyl-tRNA, thus increasing their reactivity as acceptors for peptidyl transferase. The protein is Elongation factor P (efp) of Mycoplasma genitalium (strain ATCC 33530 / DSM 19775 / NCTC 10195 / G37) (Mycoplasmoides genitalium).